A 423-amino-acid polypeptide reads, in one-letter code: Maltooligosaccharide ABC transporter solute-binding lipoprotein (423 aa).

A signal peptide spans Met-1–Ala-24. The N-palmitoyl cysteine moiety is linked to residue Cys-25. Cys-25 carries S-diacylglycerol cysteine lipidation. Residues Tyr-52, Asp-77, Asp-83, Asp-103–Arg-104, Glu-148, Asp-193, Asn-196, Glu-251–Gly-254, Trp-274, and Lys-307 each bind substrate.

Belongs to the bacterial solute-binding protein 1 family.

It localises to the cell membrane. In terms of biological role, part of an ABC transporter complex involved in the uptake of maltodextrins. Binds glycogen-derived linear maltooligosaccharides increasing in size from maltotriose to maltooctaose with the highest affinity for maltotriose. Has a very weak affinity for maltose. Has also a very low affinity for maltotetraitol, indicating that the binding is selective for maltooligosaccharides with an intact reducing end. This is Maltooligosaccharide ABC transporter solute-binding lipoprotein (malX) from Streptococcus pneumoniae (strain ATCC BAA-255 / R6).